The following is a 169-amino-acid chain: Peptide deformylase 1 (169 aa).

Residues C93 and H135 each coordinate Fe cation. The active site involves E136. Residue H139 coordinates Fe cation.

This sequence belongs to the polypeptide deformylase family. It depends on Fe(2+) as a cofactor.

It catalyses the reaction N-terminal N-formyl-L-methionyl-[peptide] + H2O = N-terminal L-methionyl-[peptide] + formate. Removes the formyl group from the N-terminal Met of newly synthesized proteins. Requires at least a dipeptide for an efficient rate of reaction. N-terminal L-methionine is a prerequisite for activity but the enzyme has broad specificity at other positions. This Corynebacterium efficiens (strain DSM 44549 / YS-314 / AJ 12310 / JCM 11189 / NBRC 100395) protein is Peptide deformylase 1.